We begin with the raw amino-acid sequence, 729 residues long: Hydroxamate siderophore receptor FhuE (729 aa).

An N-terminal signal peptide occupies residues 1-36 (MLSTQFNRDNQYQAITKPSLLAGCIALALLPSAAFA). The TonB box signature appears at 42–49 (ETVIVEGS). Positions 48–72 (GSATAPDDGENDYSVTSTSAGTKMQ) are disordered. Over residues 60–72 (YSVTSTSAGTKMQ) the composition is skewed to polar residues. The region spanning 74-183 (TQRDIPQSVT…PSAAINMVRK (110 aa)) is the TBDR plug domain. Residues arginine 117, arginine 142, tryptophan 275, tyrosine 357, asparagine 373, and tryptophan 416 each coordinate Fe(III)-coprogen. A TBDR beta-barrel domain is found at 189–729 (EFKGDVSAEY…NFSITGTYQF (541 aa)). The TonB C-terminal box motif lies at 712–729 (SIVYGTPRNFSITGTYQF).

This sequence belongs to the TonB-dependent receptor family.

It is found in the cell outer membrane. Functionally, involved in the active transport across the outer membrane of iron complexed with linear hydroxamate siderophores coprogen, rhodotorulic acid and ferrioxamine B. Binds Fe-coprogen with high affinity, rhodotorulic acid to a lesser extent, and weakly to ferrioxamine B. Selective for planar siderophores. Does not use cyclic siderophores ferrichrome nor ferrioxamine E as substrates. The polypeptide is Hydroxamate siderophore receptor FhuE (Escherichia coli (strain K12)).